The following is a 335-amino-acid chain: MFLTLIAGLISLLLTALIMPHFIKFYQMKKIGGQQMHEDVKQHLAKAGTPTMGGTVFLLVASFVSFLFAILFFSHGKSMGLITGILAIVLIYGFIGFLDDFLKIFKQINEGLTPIQKLSLQIVGGLIFYFLHVVPSGIDAINVFGFPVHLGLLYIFFVLFWVVGFSNAVNLTDGIDGLASISVVISLLTYSVIAIHQNQYDVLLLCGIMIGALLGFFIFNHKPAKVFMGDVGSLALGAMLAAISIALRQEWTLLVIGLVYVFETSSVMLQVSYFKYTKKKFGEGRRIFRMTPFHHHLELGGLSGKAERWSEWKVDAFLWSVGAVSSLIVLAILYL.

10 helical membrane-spanning segments follow: residues 3–23 (LTLIAGLISLLLTALIMPHFI), 53–73 (GGTVFLLVASFVSFLFAILFF), 78–98 (SMGLITGILAIVLIYGFIGFL), 118–138 (LSLQIVGGLIFYFLHVVPSGI), 143–163 (VFGFPVHLGLLYIFFVLFWVV), 175–195 (IDGLASISVVISLLTYSVIAI), 200–220 (YDVLLLCGIMIGALLGFFIFN), 226–246 (VFMGDVGSLALGAMLAAISIA), 251–271 (WTLLVIGLVYVFETSSVMLQV), and 314–334 (VDAFLWSVGAVSSLIVLAILY).

This sequence belongs to the glycosyltransferase 4 family. MraY subfamily. It depends on Mg(2+) as a cofactor.

It localises to the cell membrane. It catalyses the reaction UDP-N-acetyl-alpha-D-muramoyl-L-alanyl-gamma-D-glutamyl-L-lysyl-D-alanyl-D-alanine + di-trans,octa-cis-undecaprenyl phosphate = Mur2Ac(oyl-L-Ala-gamma-D-Glu-L-Lys-D-Ala-D-Ala)-di-trans,octa-cis-undecaprenyl diphosphate + UMP. It participates in cell wall biogenesis; peptidoglycan biosynthesis. Functionally, catalyzes the initial step of the lipid cycle reactions in the biosynthesis of the cell wall peptidoglycan: transfers peptidoglycan precursor phospho-MurNAc-pentapeptide from UDP-MurNAc-pentapeptide onto the lipid carrier undecaprenyl phosphate, yielding undecaprenyl-pyrophosphoryl-MurNAc-pentapeptide, known as lipid I. This is Phospho-N-acetylmuramoyl-pentapeptide-transferase from Streptococcus uberis (strain ATCC BAA-854 / 0140J).